The following is a 1897-amino-acid chain: Spectinabilin polyketide synthase system protein NorA (1897 aa).

In terms of domain architecture, Ketosynthase family 3 (KS3) spans 112-536; that stretch reads EEPIAIVGMG…GTNAHIILEQ (425 aa). Active-site for beta-ketoacyl synthase activity residues include Cys-283, His-418, and His-458. The tract at residues 538–563 is disordered; it reads APEPERPHAPEADGEPRPLPWPVSGH. The span at 540 to 553 shows a compositional bias: basic and acidic residues; it reads EPERPHAPEADGEP. Residues 644–962 form the Malonyl-CoA:ACP transacylase (MAT) domain; sequence FVFPGQGSQW…VAEAHVHGVA (319 aa). The N-terminal hotdog fold stretch occupies residues 1012-1139; that stretch reads HPLLGAAIPL…GTLAPGGGHP (128 aa). Residues 1012–1289 form the PKS/mFAS DH domain; it reads HPLLGAAIPL…MRPVTAEALH (278 aa). The Proton acceptor; for dehydratase activity role is filled by His-1045. Positions 1113–1152 are disordered; sequence SRPEDAGADEPWTRHAEGTLAPGGGHPRQDPGPWPPTGAR. The tract at residues 1151-1289 is C-terminal hotdog fold; sequence AREIDLDDCY…MRPVTAEALH (139 aa). Residue Asp-1211 is the Proton donor; for dehydratase activity of the active site. The region spanning 1494–1671 is the Ketoreductase (KR) domain; sequence GTVLVTGGLG…GVSMGWGMWA (178 aa). The 76-residue stretch at 1777–1852 folds into the Carrier domain; that stretch reads ALLLGVVRGH…ALSRYLRTLL (76 aa). Position 1812 is an O-(pantetheine 4'-phosphoryl)serine (Ser-1812). Positions 1854–1873 are disordered; the sequence is PDPAPAPTAPDGQPGPDQAD. Positions 1862-1871 are enriched in low complexity; sequence APDGQPGPDQ.

In terms of assembly, the spectinabilin polyketide synthase complex is composed of 4 proteins, NorA, NorA', NorB and NorC. The complex comprises 6 modules with a total of 28 catalytic domains catalyzing 7 chain elongations. NorA comprises one module, NorA' two modules, NorB one module and NorC two modules. Pantetheine 4'-phosphate serves as cofactor.

It catalyses the reaction 4-nitrobenzoyl-CoA + 6 (S)-methylmalonyl-CoA + malonyl-CoA + 6 NADPH + 12 H(+) = demethyldeoxyspectinabilin + 7 CO2 + 6 NADP(+) + 8 CoA + 5 H2O. It participates in antibiotic biosynthesis. Its pathway is polyketide biosynthesis. Functionally, component of a type I modular polyketide synthase (PKS) that generates the backbone of the antibiotic spectinabilin (also known as neoaureothin), a nitroaryl-substituted polyketide metabolite. This PKS system accepts the unusual starter unit 4-nitrobenzoyl-CoA and extends it by 6 molecules of (S)-methylmalonyl-CoA and a single molecule of malonyl-CoA. The first module, NorA, is used twice in an iterative fashion. The sequence is that of Spectinabilin polyketide synthase system protein NorA from Streptomyces orinoci (Streptoverticillium orinoci).